The sequence spans 306 residues: Probable zinc metalloprotease VDBG_06923 (306 aa).

Positions 1–28 (MNYEAEQPGANDDASGVAVALELARVLA) are cleaved as a signal peptide. Zn(2+)-binding residues include aspartate 12 and glutamate 45. A glycan (N-linked (GlcNAc...) asparagine) is linked at asparagine 60. Zn(2+) is bound at residue aspartate 72. Positions 218 to 306 (APAKVNNVRV…KSPVTIPFPT (89 aa)) constitute a Fibronectin type-III domain. Residues asparagine 228, asparagine 234, and asparagine 244 are each glycosylated (N-linked (GlcNAc...) asparagine).

The protein belongs to the peptidase M28 family. M28B subfamily. It depends on Zn(2+) as a cofactor.

It is found in the secreted. This Verticillium alfalfae (strain VaMs.102 / ATCC MYA-4576 / FGSC 10136) (Verticillium wilt of alfalfa) protein is Probable zinc metalloprotease VDBG_06923.